A 443-amino-acid chain; its full sequence is MPSQNAVFSQEGNMEEEEMNDGSQMVRSQESLTFQDVAVDFTREEWDQLYPAQKNLYRDVMLENYRNLVALGYQLCKPEVIAQLELEEEWVIERDSLLDTHPDGENRPEIKKSTTSQNISDENQTHEMIMERLAGDSFWYSILGGLWDFDYHPEFNQENHKRYLGQVTLTHKKITQERSLECNKFAENCNLNSNLMQQRIPSIKIPLNSDTQGNSIKHNSDLIYYQGNYVRETPYEYSECGKIFNQHILLTDHIHTAEKPSECGKAFSHTSSLSQPQMLLTGEKPYKCDECGKRFSQRIHLIQHQRIHTGEKPFICNGCGKAFRQHSSFTQHLRIHTGEKPYKCNQCGKAFSRITSLTEHHRLHTGEKPYECGFCGKAFSQRTHLNQHERTHTGEKPYKCNECGKAFSQSAHLNQHRKIHTREKLCEYKCEQTVRHSPSFSST.

Over residues 1–10 the composition is skewed to polar residues; that stretch reads MPSQNAVFSQ. Disordered regions lie at residues 1–23 and 99–118; these read MPSQ…NDGS and DTHP…TSQN. In terms of domain architecture, KRAB spans 32-102; it reads LTFQDVAVDF…ERDSLLDTHP (71 aa). Over residues 99-112 the composition is skewed to basic and acidic residues; it reads DTHPDGENRPEIKK. The segment at 255 to 280 adopts a C2H2-type 1; degenerate zinc-finger fold; the sequence is HTAEKPSECGKAFSHTSSLSQPQMLL. 5 C2H2-type zinc fingers span residues 286–308, 314–336, 342–364, 370–392, and 398–420; these read YKCD…QRIH, FICN…LRIH, YKCN…HRLH, YECG…ERTH, and YKCN…RKIH.

This sequence belongs to the krueppel C2H2-type zinc-finger protein family. As to expression, expressed in fetal and adult brain.

It localises to the nucleus. May be involved in transcriptional regulation. In Homo sapiens (Human), this protein is Zinc finger protein 713.